A 219-amino-acid chain; its full sequence is 7-carboxy-7-deazaguanine synthase (219 aa).

Residues 22 to 24 (IQG) and R37 each bind substrate. The Radical SAM core domain maps to 28–219 (LVGLPSVFIR…PQVHKCFDLK (192 aa)). The [4Fe-4S] cluster site is built by C41, C45, and C48. Residue T81 coordinates substrate. Residues G83 and 130–132 (SPK) contribute to the S-adenosyl-L-methionine site.

Belongs to the radical SAM superfamily. 7-carboxy-7-deazaguanine synthase family. As to quaternary structure, homodimer. It depends on [4Fe-4S] cluster as a cofactor. S-adenosyl-L-methionine serves as cofactor. The cofactor is Mg(2+).

It carries out the reaction 6-carboxy-5,6,7,8-tetrahydropterin + H(+) = 7-carboxy-7-deazaguanine + NH4(+). It functions in the pathway purine metabolism; 7-cyano-7-deazaguanine biosynthesis. Its function is as follows. Catalyzes the complex heterocyclic radical-mediated conversion of 6-carboxy-5,6,7,8-tetrahydropterin (CPH4) to 7-carboxy-7-deazaguanine (CDG), a step common to the biosynthetic pathways of all 7-deazapurine-containing compounds. This Aquifex aeolicus (strain VF5) protein is 7-carboxy-7-deazaguanine synthase.